The sequence spans 274 residues: Exosome complex component Rrp42 (274 aa).

It belongs to the RNase PH family. Rrp42 subfamily. In terms of assembly, component of the archaeal exosome complex. Forms a hexameric ring-like arrangement composed of 3 Rrp41-Rrp42 heterodimers. The hexameric ring associates with a trimer of Rrp4 and/or Csl4 subunits.

It localises to the cytoplasm. Its function is as follows. Non-catalytic component of the exosome, which is a complex involved in RNA degradation. Contributes to the structuring of the Rrp41 active site. This chain is Exosome complex component Rrp42, found in Pyrococcus abyssi (strain GE5 / Orsay).